We begin with the raw amino-acid sequence, 248 residues long: Pyridoxal 4-dehydrogenase (248 aa).

11 to 35 (LVTGAAQGIGKAIAARLAADGATVI) provides a ligand contact to NAD(+). S141 contacts substrate. Y154 functions as the Proton acceptor in the catalytic mechanism.

It belongs to the short-chain dehydrogenases/reductases (SDR) family. Homotetramer.

The enzyme catalyses pyridoxal + NAD(+) = 4-pyridoxolactone + NADH + H(+). It participates in cofactor degradation; B6 vitamer degradation; 4-pyridoxate from pyridoxal: step 1/2. Its function is as follows. Involved in the degradation of pyridoxine or pyridoxamine (free, phosphate-unbound, forms of vitamin B6). Oxidizes pyridoxal to 4-pyridoxolactone, but does not have activity toward pyridoxal 5'-phosphate, pyridoxine, pyridoxamine, pyridoxamine 5'-phosphate, 4-phthalaldehyde, 2-nitrobenzaldehyde, pyridine, formaldehyde, 2-carboxybenzaldehyde or sugars. In Mesorhizobium japonicum (strain LMG 29417 / CECT 9101 / MAFF 303099) (Mesorhizobium loti (strain MAFF 303099)), this protein is Pyridoxal 4-dehydrogenase.